We begin with the raw amino-acid sequence, 420 residues long: Glutamyl-tRNA reductase (420 aa).

Residues 49 to 52 (TCNR), S109, 114 to 116 (EPQ), and Q120 contribute to the substrate site. Catalysis depends on C50, which acts as the Nucleophile. 189–194 (GAGETI) is an NADP(+) binding site.

This sequence belongs to the glutamyl-tRNA reductase family. In terms of assembly, homodimer.

The enzyme catalyses (S)-4-amino-5-oxopentanoate + tRNA(Glu) + NADP(+) = L-glutamyl-tRNA(Glu) + NADPH + H(+). Its pathway is porphyrin-containing compound metabolism; protoporphyrin-IX biosynthesis; 5-aminolevulinate from L-glutamyl-tRNA(Glu): step 1/2. Its function is as follows. Catalyzes the NADPH-dependent reduction of glutamyl-tRNA(Glu) to glutamate 1-semialdehyde (GSA). The polypeptide is Glutamyl-tRNA reductase (Sodalis glossinidius (strain morsitans)).